Here is a 360-residue protein sequence, read N- to C-terminus: Glutamate 5-kinase (360 aa).

Position 7 (K7) interacts with ATP. Substrate-binding residues include S47, D134, and N146. ATP is bound by residues 166 to 167 and 210 to 216; these read TD and TGGITTK. A PUA domain is found at 275–348; it reads VGQITLDEGA…LNKKENINSS (74 aa).

This sequence belongs to the glutamate 5-kinase family.

It localises to the cytoplasm. It carries out the reaction L-glutamate + ATP = L-glutamyl 5-phosphate + ADP. It functions in the pathway amino-acid biosynthesis; L-proline biosynthesis; L-glutamate 5-semialdehyde from L-glutamate: step 1/2. In terms of biological role, catalyzes the transfer of a phosphate group to glutamate to form L-glutamate 5-phosphate. This chain is Glutamate 5-kinase, found in Prochlorococcus marinus subsp. pastoris (strain CCMP1986 / NIES-2087 / MED4).